Reading from the N-terminus, the 296-residue chain is LysM and putative peptidoglycan-binding domain-containing protein 4 (296 aa).

At 1–217 (MRHKELLSKT…PMDGADCGIQ (217 aa)) the chain is on the extracellular side. Asparagine 30 is a glycosylation site (N-linked (GlcNAc...) asparagine). Positions 74–118 (LQRELAQEDSLNKLALQYGCKVADIKKVNNFIREQDLYALKSIKS) constitute a LysM domain. A helical transmembrane segment spans residues 218-238 (WWNAVFIMLLIGIVLPIFYLV). Residues 239–296 (YFKIQASGETPNSLNTAAIPNGSMAMGTVPGQAPRLAVAVPTVPSADSQFSQTTQAGN) lie on the Cytoplasmic side of the membrane.

It localises to the membrane. This Pongo abelii (Sumatran orangutan) protein is LysM and putative peptidoglycan-binding domain-containing protein 4 (LYSMD4).